Consider the following 709-residue polypeptide: MATCAEILRSEFPEIDGQVFDYVTGVLHSGSADFESVDDLVEAVGELLQEVSGDSKDDAGIRAVCQRMYNTLRLAEPQSQGNSQVLLDAPIQLSKITENYDCGTKLPGLLKREQSSTVNAKKLEKAEARLKAKQEKRSEKDTLKTSNPLVLEEASASQAGSRKESRLESSGKNKSYDVRIENFDVSFGDRVLLAGADVNLAWGRRYGLVGRNGLGKTTLLKMLATRSLRVPAHISLLHVEQEVAEDDTPALQSVLESDSVREDLLRRERELSAHIAAGRVEGSEAAELAEIYAKLEEIEADKAPARASVILAGLGFTPKMQQQPTREFSGGWRMRLALARALFARPDLLLLDEPTNMLDVRAILWLENYLQTWPSTILVVSHDRNFLNAIAADIIHLHSQRLDGYRGDFETFIKSKQERLLNQQREYEAQQQYRQHIQVFIDRFRYNANRASQVQSKLKMLEKLPELKPVDKESEVVMKFPDGFEKFSPPILQLDEVDFYYDPKHVIFSRLSVSADLESRICVVGENGAGKSTMLKLLLGDLAPVRGIRHAHRNLKIGYFSQHHVEQLDLNVSAVELLARKFPGRPEEEYRHQLGRYGISGELAMRPVASLSGGQKSRVAFAQMTMPCPNFYILDEPTNHLDMETIEALGRALNNFRGGVILVSHDERFIRLVCRELWVCEGGGVTRVEGGFDQYRALLQEQFRREGFL.

Position 2 is an N-acetylalanine (Ala2). The residue at position 83 (Ser83) is a Phosphoserine. Positions 129–143 are enriched in basic and acidic residues; that stretch reads RLKAKQEKRSEKDTL. The tract at residues 129-171 is disordered; that stretch reads RLKAKQEKRSEKDTLKTSNPLVLEEASASQAGSRKESRLESSG. Ser155, Ser157, and Ser161 each carry phosphoserine. Over residues 161 to 171 the composition is skewed to basic and acidic residues; it reads SRKESRLESSG. ABC transporter domains lie at 178–424 and 492–707; these read VRIE…LNQQ and LQLD…RREG. 210-217 serves as a coordination point for ATP; it reads GRNGLGKT. Ser283 is subject to Phosphoserine. An ATP-binding site is contributed by 525-532; it reads GENGAGKS.

This sequence belongs to the ABC transporter superfamily. ABCF family. EF3 subfamily.

In terms of biological role, displays an antiviral effect against flaviviruses in the presence of OAS1B. The sequence is that of ATP-binding cassette sub-family F member 3 (ABCF3) from Pongo abelii (Sumatran orangutan).